A 481-amino-acid polypeptide reads, in one-letter code: Palmitoyltransferase PFA4 (481 aa).

The disordered stretch occupies residues 1 to 22 (MTNQDPDDGAYPSSQSDDDGIE). Over 1-66 (MTNQDPDDGA…APLTGRRRTP (66 aa)) the chain is Cytoplasmic. The chain crosses the membrane as a helical span at residues 67 to 87 (LSWTEVIWVSLTLLLIAVLGY). Residues 88–108 (SSQLYVMLPYYEKTPSFSPQA) are Lumenal-facing. A helical transmembrane segment spans residues 109–129 (LAAVLVPFNLGLLAIYYNYWL). The Cytoplasmic segment spans residues 130–223 (CVTTDAGSVP…LANCVGHFNH (94 aa)). In terms of domain architecture, DHHC spans 181 to 231 (RYCKTCSAFKPPRSHHCKTCQRCVLRMDHHCPWLANCVGHFNHAHFIRFLF). Cys-211 serves as the catalytic S-palmitoyl cysteine intermediate. Residues 224–244 (AHFIRFLFYVDVTCLYHLIMI) form a helical membrane-spanning segment. The Lumenal portion of the chain corresponds to 245 to 265 (SCRVLDSFNSYTYWREPCARE). Residues 266 to 286 (LVWLVVNYALCIPVILLVGIF) form a helical membrane-spanning segment. Topologically, residues 287–481 (SLYHFYCLAV…EVRPHTPWSV (195 aa)) are cytoplasmic. The tract at residues 370–481 (SQYRWPPKDP…EVRPHTPWSV (112 aa)) is disordered. The span at 418–431 (SSPSSSDSHSSLHL) shows a compositional bias: low complexity. 2 stretches are compositionally biased toward basic and acidic residues: residues 441–452 (LPHHFDPPHDPD) and 466–475 (RGSEGYEVRP).

The protein belongs to the DHHC palmitoyltransferase family. PFA4 subfamily.

Its subcellular location is the endoplasmic reticulum membrane. The catalysed reaction is L-cysteinyl-[protein] + hexadecanoyl-CoA = S-hexadecanoyl-L-cysteinyl-[protein] + CoA. In terms of biological role, mediates the reversible addition of palmitate to target proteins, thereby regulating their membrane association and biological function. The chain is Palmitoyltransferase PFA4 from Mycosarcoma maydis (Corn smut fungus).